The following is a 158-amino-acid chain: Small ribosomal subunit protein bS16 (158 aa).

The span at 111–121 (AAAGLAEAPTK) shows a compositional bias: low complexity. The interval 111–158 (AAAGLAEAPTKPAKKAPKAEAAPKTEAAPKADAPKTEEQAGAGSGEQG) is disordered. Basic and acidic residues predominate over residues 127-148 (PKAEAAPKTEAAPKADAPKTEE).

It belongs to the bacterial ribosomal protein bS16 family.

The polypeptide is Small ribosomal subunit protein bS16 (Salinispora arenicola (strain CNS-205)).